The chain runs to 65 residues: Gallinacin-1 (65 aa).

A signal peptide spans 1–19 (MRIVYLLLPFILLLAQGAA). A propeptide spanning residues 20-25 (GSSQAL) is cleaved from the precursor. 3 disulfide bridges follow: Cys31–Cys59, Cys38–Cys53, and Cys43–Cys60.

The protein belongs to the beta-defensin family. As to expression, strong expression in the bone marrow, lung, testis. Moderate expression in the bursa and intestine. Low expression in the cloaca, gall bladder, brain and pancreas. Expressed in the vagina, ovarian stroma and the theca and granulosa layers of the ovarian follicle.

It is found in the secreted. Its subcellular location is the cytoplasmic granule. Its function is as follows. Has bactericidal activity. Potent activity against E.coli ML-35, L.monocytogenes EGD and C.albicans. In Gallus gallus (Chicken), this protein is Gallinacin-1 (GAL1).